Reading from the N-terminus, the 151-residue chain is Transcriptional regulator MraZ (151 aa).

2 consecutive SpoVT-AbrB domains span residues 5–52 (ANAI…PLSE) and 81–124 (AVDL…DEDA).

This sequence belongs to the MraZ family. In terms of assembly, forms oligomers.

It localises to the cytoplasm. It is found in the nucleoid. The sequence is that of Transcriptional regulator MraZ from Pseudomonas syringae pv. syringae (strain B728a).